Here is a 573-residue protein sequence, read N- to C-terminus: Sulfite reductase [NADPH] hemoprotein beta-component (573 aa).

Residues Cys-438, Cys-444, Cys-483, and Cys-487 each coordinate [4Fe-4S] cluster. Cys-487 is a siroheme binding site.

The protein belongs to the nitrite and sulfite reductase 4Fe-4S domain family. Alpha(8)-beta(8). The alpha component is a flavoprotein, the beta component is a hemoprotein. Siroheme is required as a cofactor. Requires [4Fe-4S] cluster as cofactor.

It catalyses the reaction hydrogen sulfide + 3 NADP(+) + 3 H2O = sulfite + 3 NADPH + 4 H(+). The protein operates within sulfur metabolism; hydrogen sulfide biosynthesis; hydrogen sulfide from sulfite (NADPH route): step 1/1. Its function is as follows. Component of the sulfite reductase complex that catalyzes the 6-electron reduction of sulfite to sulfide. This is one of several activities required for the biosynthesis of L-cysteine from sulfate. The polypeptide is Sulfite reductase [NADPH] hemoprotein beta-component (Nitrosomonas europaea (strain ATCC 19718 / CIP 103999 / KCTC 2705 / NBRC 14298)).